Reading from the N-terminus, the 272-residue chain is 4-hydroxy-tetrahydrodipicolinate reductase (272 aa).

NAD(+) contacts are provided by residues 10 to 15 (GAGGRM), E36, 100 to 102 (GTT), and 124 to 127 (SGNM). The Proton donor/acceptor role is filled by H157. H158 contacts (S)-2,3,4,5-tetrahydrodipicolinate. Residue K161 is the Proton donor of the active site. A (S)-2,3,4,5-tetrahydrodipicolinate-binding site is contributed by 167–168 (GT).

The protein belongs to the DapB family.

Its subcellular location is the cytoplasm. The enzyme catalyses (S)-2,3,4,5-tetrahydrodipicolinate + NAD(+) + H2O = (2S,4S)-4-hydroxy-2,3,4,5-tetrahydrodipicolinate + NADH + H(+). It catalyses the reaction (S)-2,3,4,5-tetrahydrodipicolinate + NADP(+) + H2O = (2S,4S)-4-hydroxy-2,3,4,5-tetrahydrodipicolinate + NADPH + H(+). It participates in amino-acid biosynthesis; L-lysine biosynthesis via DAP pathway; (S)-tetrahydrodipicolinate from L-aspartate: step 4/4. Functionally, catalyzes the conversion of 4-hydroxy-tetrahydrodipicolinate (HTPA) to tetrahydrodipicolinate. The polypeptide is 4-hydroxy-tetrahydrodipicolinate reductase (Bradyrhizobium sp. (strain ORS 278)).